Here is a 190-residue protein sequence, read N- to C-terminus: Pyridoxal 5'-phosphate synthase subunit PdxT (190 aa).

46 to 48 (GES) lines the L-glutamine pocket. The active-site Nucleophile is C78. L-glutamine-binding positions include R105 and 138–139 (IR). Catalysis depends on charge relay system residues H174 and E176.

This sequence belongs to the glutaminase PdxT/SNO family. As to quaternary structure, in the presence of PdxS, forms a dodecamer of heterodimers. Only shows activity in the heterodimer.

It catalyses the reaction aldehydo-D-ribose 5-phosphate + D-glyceraldehyde 3-phosphate + L-glutamine = pyridoxal 5'-phosphate + L-glutamate + phosphate + 3 H2O + H(+). It carries out the reaction L-glutamine + H2O = L-glutamate + NH4(+). The protein operates within cofactor biosynthesis; pyridoxal 5'-phosphate biosynthesis. Its function is as follows. Catalyzes the hydrolysis of glutamine to glutamate and ammonia as part of the biosynthesis of pyridoxal 5'-phosphate. The resulting ammonia molecule is channeled to the active site of PdxS. This chain is Pyridoxal 5'-phosphate synthase subunit PdxT, found in Bifidobacterium longum (strain NCC 2705).